The following is a 260-amino-acid chain: MICOS complex subunit mic25-a (260 aa).

Positions 1 to 92 (MGGSESTGRK…KPTARGVGHQ (92 aa)) are disordered. G2 carries N-myristoyl glycine lipidation. Residues 28–39 (RLSDEVVNRMKD) show a composition bias toward basic and acidic residues. The span at 48–64 (STSTASGTTSGPTTFPS) shows a compositional bias: low complexity. Residues 94–187 (AEEDLYRRYE…LNSIEKKNLE (94 aa)) adopt a coiled-coil conformation. One can recognise a CHCH domain in the interval 213-255 (DPVCMDLQSNILKCYAENKQERLNCSDLAKEYGKCVSAAQKNL). 2 consecutive short sequence motifs (cx9C motif) follow at residues 216–226 (CMDLQSNILKC) and 237–247 (CSDLAKEYGKC). Cystine bridges form between C216/C247 and C226/C237.

This sequence belongs to the MICOS complex subunit Mic19 family. Metazoan Mic25 subfamily. Component of the mitochondrial contact site and cristae organizing system (MICOS) complex (also known as MINOS or MitOS complex).

It localises to the mitochondrion inner membrane. Its function is as follows. Component of the MICOS complex, a large protein complex of the mitochondrial inner membrane that plays crucial roles in the maintenance of crista junctions, inner membrane architecture, and formation of contact sites to the outer membrane. This Xenopus laevis (African clawed frog) protein is MICOS complex subunit mic25-a (chchd6-a).